Reading from the N-terminus, the 384-residue chain is Succinyl-diaminopimelate desuccinylase (384 aa).

His-69 is a Zn(2+) binding site. Residue Asp-71 is part of the active site. Position 103 (Asp-103) interacts with Zn(2+). Glu-137 functions as the Proton acceptor in the catalytic mechanism. Glu-138, Glu-166, and His-355 together coordinate Zn(2+).

This sequence belongs to the peptidase M20A family. DapE subfamily. As to quaternary structure, homodimer. It depends on Zn(2+) as a cofactor. Co(2+) serves as cofactor.

It catalyses the reaction N-succinyl-(2S,6S)-2,6-diaminopimelate + H2O = (2S,6S)-2,6-diaminopimelate + succinate. The protein operates within amino-acid biosynthesis; L-lysine biosynthesis via DAP pathway; LL-2,6-diaminopimelate from (S)-tetrahydrodipicolinate (succinylase route): step 3/3. Catalyzes the hydrolysis of N-succinyl-L,L-diaminopimelic acid (SDAP), forming succinate and LL-2,6-diaminopimelate (DAP), an intermediate involved in the bacterial biosynthesis of lysine and meso-diaminopimelic acid, an essential component of bacterial cell walls. This chain is Succinyl-diaminopimelate desuccinylase, found in Rickettsia canadensis (strain McKiel).